Reading from the N-terminus, the 334-residue chain is tRNA dimethylallyltransferase (334 aa).

ATP is bound at residue 22–29; the sequence is GPTASGKT. 24–29 contacts substrate; it reads TASGKT.

It belongs to the IPP transferase family. In terms of assembly, monomer. The cofactor is Mg(2+).

It carries out the reaction adenosine(37) in tRNA + dimethylallyl diphosphate = N(6)-dimethylallyladenosine(37) in tRNA + diphosphate. Its function is as follows. Catalyzes the transfer of a dimethylallyl group onto the adenine at position 37 in tRNAs that read codons beginning with uridine, leading to the formation of N6-(dimethylallyl)adenosine (i(6)A). The sequence is that of tRNA dimethylallyltransferase from Rhodopirellula baltica (strain DSM 10527 / NCIMB 13988 / SH1).